The sequence spans 433 residues: Histidinol dehydrogenase (433 aa).

Residues Y133, Q194, and N217 each contribute to the NAD(+) site. Residues S240, Q262, and H265 each contribute to the substrate site. Zn(2+) is bound by residues Q262 and H265. Catalysis depends on proton acceptor residues E330 and H331. Residues H331, D364, E418, and H423 each contribute to the substrate site. D364 serves as a coordination point for Zn(2+). Zn(2+) is bound at residue H423.

It belongs to the histidinol dehydrogenase family. Requires Zn(2+) as cofactor.

It carries out the reaction L-histidinol + 2 NAD(+) + H2O = L-histidine + 2 NADH + 3 H(+). Its pathway is amino-acid biosynthesis; L-histidine biosynthesis; L-histidine from 5-phospho-alpha-D-ribose 1-diphosphate: step 9/9. In terms of biological role, catalyzes the sequential NAD-dependent oxidations of L-histidinol to L-histidinaldehyde and then to L-histidine. This chain is Histidinol dehydrogenase, found in Dechloromonas aromatica (strain RCB).